The chain runs to 222 residues: Gamma-glutamyl cyclotransferase gliK (222 aa).

2 helical membrane-spanning segments follow: residues 154–174 (GWWFQLGVALFLWPWTRAAII) and 187–207 (GHVPAWFLFIFDCLLWLMWAQ).

This sequence belongs to the class-I pyridoxal-phosphate-dependent aminotransferase family.

It localises to the membrane. The catalysed reaction is an alpha-(gamma-L-glutamyl)-L-amino acid = 5-oxo-L-proline + an L-alpha-amino acid. The protein operates within secondary metabolite biosynthesis. Gamma-glutamyl cyclotransferase; part of the gene cluster that mediates the biosynthesis of an unusual class of epipolythiodioxopiperazines (ETPs) lacking the reactive thiol group important for toxicity. Firstly, L-tyrosine is prenylated by tcpD, before undergoing condensation with L-glycine in a reaction catalyzed by the NRPS tcpP leading to the diketopiperazine (DKP) backbone. Afterwards the alpha-carbon of tyrosine is oxidized by the cytochrome P450 tcpC to form a hydroxyl group. However, in contrast other ETP biosynthesis pathways studied so far, tcpC is not able to bishydroxylate the DKP at both alpha-carbon positions, but hydroxylates the alpha-carbon of the tyrosine part and the nitrogen of the glycine part. The next steps involve an alpha,beta-elimination reaction catalyzed by tcpI, a methylation by the methyltransferase tcpN the action of the four enzyme cascade tcpG/K/J/I. Due to a dysfunctional cytochrome P450 monooxygenase tcpC, the pathway leads to the biosynthesis of probable non-toxic metabolites lacking the reactive thiol group. The sequence is that of Gamma-glutamyl cyclotransferase gliK from Claviceps purpurea (strain 20.1) (Ergot fungus).